The chain runs to 321 residues: Glucokinase (321 aa).

8–13 (GDVGGT) contacts ATP.

It belongs to the bacterial glucokinase family.

It is found in the cytoplasm. The enzyme catalyses D-glucose + ATP = D-glucose 6-phosphate + ADP + H(+). This Shigella sonnei (strain Ss046) protein is Glucokinase.